We begin with the raw amino-acid sequence, 96 residues long: Neurotoxin 23 (96 aa).

An N-terminal signal peptide occupies residues 1-22 (MKNIVIIITVAVLFNLFGESLQ). Positions 26-89 (FETYPLNQDD…FLAEIIDTCN (64 aa)) constitute an LCN-type CS-alpha/beta domain. Cystine bridges form between Cys-40–Cys-63, Cys-49–Cys-68, and Cys-53–Cys-70.

Belongs to the long (3 C-C) scorpion toxin superfamily. Expressed by the venom gland.

Its subcellular location is the secreted. This Lychas mucronatus (Chinese swimming scorpion) protein is Neurotoxin 23.